We begin with the raw amino-acid sequence, 349 residues long: S-adenosylmethionine:tRNA ribosyltransferase-isomerase (349 aa).

The protein belongs to the QueA family. As to quaternary structure, monomer.

It localises to the cytoplasm. It catalyses the reaction 7-aminomethyl-7-carbaguanosine(34) in tRNA + S-adenosyl-L-methionine = epoxyqueuosine(34) in tRNA + adenine + L-methionine + 2 H(+). It participates in tRNA modification; tRNA-queuosine biosynthesis. In terms of biological role, transfers and isomerizes the ribose moiety from AdoMet to the 7-aminomethyl group of 7-deazaguanine (preQ1-tRNA) to give epoxyqueuosine (oQ-tRNA). The chain is S-adenosylmethionine:tRNA ribosyltransferase-isomerase from Ruegeria sp. (strain TM1040) (Silicibacter sp.).